Reading from the N-terminus, the 320-residue chain is Acetyl-coenzyme A carboxylase carboxyl transferase subunit beta (320 aa).

The CoA carboxyltransferase N-terminal domain maps to leucine 25–aspartate 294. 4 residues coordinate Zn(2+): cysteine 29, cysteine 32, cysteine 48, and cysteine 51. Residues cysteine 29–cysteine 51 form a C4-type zinc finger. A disordered region spans residues leucine 290–serine 320.

Belongs to the AccD/PCCB family. In terms of assembly, acetyl-CoA carboxylase is a heterohexamer composed of biotin carboxyl carrier protein (AccB), biotin carboxylase (AccC) and two subunits each of ACCase subunit alpha (AccA) and ACCase subunit beta (AccD). Zn(2+) is required as a cofactor.

The protein resides in the cytoplasm. It carries out the reaction N(6)-carboxybiotinyl-L-lysyl-[protein] + acetyl-CoA = N(6)-biotinyl-L-lysyl-[protein] + malonyl-CoA. The protein operates within lipid metabolism; malonyl-CoA biosynthesis; malonyl-CoA from acetyl-CoA: step 1/1. Its function is as follows. Component of the acetyl coenzyme A carboxylase (ACC) complex. Biotin carboxylase (BC) catalyzes the carboxylation of biotin on its carrier protein (BCCP) and then the CO(2) group is transferred by the transcarboxylase to acetyl-CoA to form malonyl-CoA. This Dinoroseobacter shibae (strain DSM 16493 / NCIMB 14021 / DFL 12) protein is Acetyl-coenzyme A carboxylase carboxyl transferase subunit beta.